Here is a 172-residue protein sequence, read N- to C-terminus: Calcium channel flower homolog (172 aa).

The Cytoplasmic segment spans residues 1-32 (MSSSGGAPGASASSAPPAQEEGMTWWYRWLCR). A helical membrane pass occupies residues 33 to 53 (LSGVLGAVSCAISGLFNCITI). At 54-57 (HPLN) the chain is on the extracellular side. A helical membrane pass occupies residues 58–78 (IAAGVWMIMNAFILLLCEAPF). The Cytoplasmic portion of the chain corresponds to 79–102 (CCQFIEFANTVAEKVDRLRSWQKA). A helical transmembrane segment spans residues 103–123 (VFYCGMAVVPIVISLTLTTLL). The Extracellular portion of the chain corresponds to 124-125 (GN). The chain crosses the membrane as a helical span at residues 126 to 142 (AIAFATGVLYGLSALGK). Residues 143–172 (KGDAISYARIQQQRQQADEEKLAETLEGEL) are Cytoplasmic-facing.

The protein belongs to the calcium channel flower family. Interacts with adaptor protein complex 2 (AP-2). Detected in skin cells at low levels of expression (at protein level).

Its subcellular location is the cell membrane. The protein localises to the cytoplasmic vesicle. The protein resides in the secretory vesicle. It is found in the synaptic vesicle. It localises to the golgi apparatus. Its subcellular location is the vesicle. The protein localises to the early endosome. The protein resides in the recycling endosome. It is found in the endoplasmic reticulum membrane. Transmembrane protein which mediates synaptic endocytosis and fitness-based cell culling. In response to different stimulus strengths, controls two major modes of synaptic vesicle (SV) retrieval in hippocampal neurons; Clathrin-mediated endocytosis (CME) in response to mild stimulation and activity-dependent bulk endocytosis (ADBE) in response to strong stimulation. In cytotoxic T-lymphoocytes (CTLs) facilitates calcium-dependent endocytosis of cytotoxic granules at the immuno synapse. Different isoforms work as fitness fingerprints in 'loser' and 'winner' cells and thereby mediate win/lose decisions as part of the cell competition process. Functionally, functions with the other flower isoforms to produce tissue-specific fitness fingerprints that identify unfit or fit cells during cell selection processes in order to maintain tissue health. During cell competition, if levels of this isoform in cells is higher than in the surrounding neighboring cells, the cells are recognized as 'winner' cells, and do not undergo elimination via apoptosis. In terms of biological role, functions with the other flower isoforms to produce tissue-specific fitness fingerprints that identify unfit or fit cells during cell selection processes in order to maintain tissue health. During cell competition, if levels of this isoform in unfit cells is higher than in the surrounding neighboring cells, the cells are recognized as 'loser' cells, and undergo elimination via apoptosis to be replaced by the surrounding healthy 'winner' cell population. This Homo sapiens (Human) protein is Calcium channel flower homolog (CACFD1).